The chain runs to 310 residues: Tryptophan 2,3-dioxygenase (310 aa).

The segment at 1 to 39 (MQPPGNDAPAGCPFSGARAQGTQAAHEAPHVPGDAGEQA) is disordered. Substrate is bound by residues 79–83 (FIIQH), tyrosine 141, and arginine 145. Histidine 268 serves as a coordination point for heme. Residue threonine 282 participates in substrate binding.

Belongs to the tryptophan 2,3-dioxygenase family. Homotetramer. It depends on heme as a cofactor.

It catalyses the reaction L-tryptophan + O2 = N-formyl-L-kynurenine. The protein operates within amino-acid degradation; L-tryptophan degradation via kynurenine pathway; L-kynurenine from L-tryptophan: step 1/2. Functionally, heme-dependent dioxygenase that catalyzes the oxidative cleavage of the L-tryptophan (L-Trp) pyrrole ring and converts L-tryptophan to N-formyl-L-kynurenine. Catalyzes the oxidative cleavage of the indole moiety. The chain is Tryptophan 2,3-dioxygenase from Burkholderia multivorans (strain ATCC 17616 / 249).